Here is a 489-residue protein sequence, read N- to C-terminus: CUGBP Elav-like family member 1-B (489 aa).

RRM domains follow at residues 16-99 (IKMF…PADS), 108-188 (RKLF…FADT), and 404-482 (ANLF…LKRS).

It belongs to the CELF/BRUNOL family. As to quaternary structure, oligomer. Oligomerization is required for RNA-binding and EDEN-dependent deadenylation. Post-translationally, phosphorylated during oocyte maturation and dephosphorylated following egg activation. Dephosphorylation is calcium dependent and correlates with the increase in the activity of EDEN-dependent deadenylation.

The protein resides in the nucleus. The protein localises to the cytoplasm. RNA-binding protein implicated in the regulation of several post-transcriptional events. May be involved in pre-mRNA alternative splicing, mRNA translation activation and stability. Mediates the rapid and sequence-specific cytoplasmic deadenylation of EDEN-containing maternal mRNAs following fertilization. Binds to AU-rich sequences (AREs) of jun mRNA. Binds to the embryonic deadenylation element (EDEN) motif localized in the 3'-UTR of maternal mRNAs. Binds to RNA containing several repeats of the consensus sequence 5'-UGU-3'. EDEN-dependent deadenylation is enhanced by the presence of an additional cis element composed of three AUU repeats. The protein is CUGBP Elav-like family member 1-B (cugbp1-b) of Xenopus laevis (African clawed frog).